The chain runs to 1342 residues: DNA-directed RNA polymerase subunit beta (1342 aa).

This sequence belongs to the RNA polymerase beta chain family. In terms of assembly, the RNAP catalytic core consists of 2 alpha, 1 beta, 1 beta' and 1 omega subunit. When a sigma factor is associated with the core the holoenzyme is formed, which can initiate transcription.

The enzyme catalyses RNA(n) + a ribonucleoside 5'-triphosphate = RNA(n+1) + diphosphate. In terms of biological role, DNA-dependent RNA polymerase catalyzes the transcription of DNA into RNA using the four ribonucleoside triphosphates as substrates. The sequence is that of DNA-directed RNA polymerase subunit beta from Shewanella amazonensis (strain ATCC BAA-1098 / SB2B).